Consider the following 285-residue polypeptide: DegV domain-containing protein CA_C3284 (285 aa).

The DegV domain occupies 3–280; the sequence is VKILTDSTSC…PGAIGIAYYT (278 aa). Serine 59 and serine 91 together coordinate hexadecanoate.

In terms of biological role, may bind long-chain fatty acids, such as palmitate, and may play a role in lipid transport or fatty acid metabolism. The protein is DegV domain-containing protein CA_C3284 of Clostridium acetobutylicum (strain ATCC 824 / DSM 792 / JCM 1419 / IAM 19013 / LMG 5710 / NBRC 13948 / NRRL B-527 / VKM B-1787 / 2291 / W).